Consider the following 600-residue polypeptide: Glutamine--fructose-6-phosphate aminotransferase [isomerizing] (600 aa).

Cys-2 acts as the Nucleophile; for GATase activity in catalysis. The 216-residue stretch at 2–217 folds into the Glutamine amidotransferase type-2 domain; that stretch reads CGIVGYIGTE…DEEIVIVTKD (216 aa). SIS domains are found at residues 283–422 and 452–590; these read IRQA…AKGI and IARD…VDKP. The active-site For Fru-6P isomerization activity is Lys-595.

Homodimer.

The protein resides in the cytoplasm. It catalyses the reaction D-fructose 6-phosphate + L-glutamine = D-glucosamine 6-phosphate + L-glutamate. Catalyzes the first step in hexosamine metabolism, converting fructose-6P into glucosamine-6P using glutamine as a nitrogen source. This Halalkalibacterium halodurans (strain ATCC BAA-125 / DSM 18197 / FERM 7344 / JCM 9153 / C-125) (Bacillus halodurans) protein is Glutamine--fructose-6-phosphate aminotransferase [isomerizing].